The sequence spans 354 residues: Probable cinnamyl alcohol dehydrogenase 1 (354 aa).

Residues Cys-47, His-69, Glu-70, Cys-100, Cys-103, Cys-106, Cys-114, and Cys-163 each contribute to the Zn(2+) site. Residues Thr-167, 188–193, 211–216, Thr-251, and 297–299 contribute to the NADP(+) site; these read GLGGLG, STSESK, and SVT.

The protein belongs to the zinc-containing alcohol dehydrogenase family. Homodimer. The cofactor is Zn(2+).

The enzyme catalyses (E)-cinnamyl alcohol + NADP(+) = (E)-cinnamaldehyde + NADPH + H(+). The catalysed reaction is (E)-coniferol + NADP(+) = (E)-coniferaldehyde + NADPH + H(+). It catalyses the reaction (E)-sinapyl alcohol + NADP(+) = (E)-sinapaldehyde + NADPH + H(+). It carries out the reaction (E)-4-coumaroyl alcohol + NADP(+) = (E)-4-coumaraldehyde + NADPH + H(+). The enzyme catalyses (E)-caffeyl alcohol + NADP(+) = (E)-caffeyl aldehyde + NADPH + H(+). It participates in aromatic compound metabolism; phenylpropanoid biosynthesis. Involved in lignin biosynthesis. Catalyzes the final step specific for the production of lignin monomers. Catalyzes the NADPH-dependent reduction of coniferaldehyde, 5-hydroxyconiferaldehyde, sinapaldehyde, 4-coumaraldehyde and caffeyl aldehyde to their respective alcohols. This chain is Probable cinnamyl alcohol dehydrogenase 1, found in Oryza sativa subsp. japonica (Rice).